Here is a 479-residue protein sequence, read N- to C-terminus: Proline--tRNA ligase 2 (479 aa).

This sequence belongs to the class-II aminoacyl-tRNA synthetase family. ProS type 3 subfamily. In terms of assembly, homodimer.

Its subcellular location is the cytoplasm. It carries out the reaction tRNA(Pro) + L-proline + ATP = L-prolyl-tRNA(Pro) + AMP + diphosphate. Functionally, catalyzes the attachment of proline to tRNA(Pro) in a two-step reaction: proline is first activated by ATP to form Pro-AMP and then transferred to the acceptor end of tRNA(Pro). This is Proline--tRNA ligase 2 from Rhodococcus jostii (strain RHA1).